The primary structure comprises 435 residues: Cytidine monophosphate-N-acetylneuraminic acid hydroxylase (435 aa).

Belongs to the CMP-Neu5Ac hydroxylase family. [2Fe-2S] cluster is required as a cofactor.

The protein localises to the cytoplasm. It carries out the reaction CMP-N-acetyl-beta-neuraminate + 2 Fe(II)-[cytochrome b5] + O2 + 2 H(+) = CMP-N-glycoloyl-beta-neuraminate + 2 Fe(III)-[cytochrome b5] + H2O. It participates in amino-sugar metabolism; N-acetylneuraminate metabolism. In terms of biological role, sialic acids are components of carbohydrate chains of glycoconjugates and are involved in cell-cell recognition and cell-pathogen interactions. Catalyzes the conversion of CMP-N-acetylneuraminic acid (CMP-Neu5Ac) into its hydroxylated derivative CMP-N-glycolylneuraminic acid (CMP-Neu5Gc), a sialic acid abundantly expressed at the surface of many cells. In Sus scrofa (Pig), this protein is Cytidine monophosphate-N-acetylneuraminic acid hydroxylase.